Consider the following 121-residue polypeptide: Small ribosomal subunit protein uS13 (121 aa).

Positions 93-121 (RGLPMRGQRTRTNARTRKGPRKAAQSLKK) are disordered.

It belongs to the universal ribosomal protein uS13 family. As to quaternary structure, part of the 30S ribosomal subunit. Forms a loose heterodimer with protein S19. Forms two bridges to the 50S subunit in the 70S ribosome.

Located at the top of the head of the 30S subunit, it contacts several helices of the 16S rRNA. In the 70S ribosome it contacts the 23S rRNA (bridge B1a) and protein L5 of the 50S subunit (bridge B1b), connecting the 2 subunits; these bridges are implicated in subunit movement. Contacts the tRNAs in the A and P-sites. The polypeptide is Small ribosomal subunit protein uS13 (Variovorax paradoxus (strain S110)).